The chain runs to 564 residues: Adenine deaminase (564 aa).

The protein belongs to the metallo-dependent hydrolases superfamily. Adenine deaminase family. Mn(2+) is required as a cofactor.

It catalyses the reaction adenine + H2O + H(+) = hypoxanthine + NH4(+). The polypeptide is Adenine deaminase (Methylobacterium sp. (strain 4-46)).